A 190-amino-acid chain; its full sequence is Peptidyl-tRNA hydrolase (190 aa).

Y18 provides a ligand contact to tRNA. Residue H23 is the Proton acceptor of the active site. TRNA-binding residues include F69, N71, and N117.

Belongs to the PTH family. In terms of assembly, monomer.

It localises to the cytoplasm. It catalyses the reaction an N-acyl-L-alpha-aminoacyl-tRNA + H2O = an N-acyl-L-amino acid + a tRNA + H(+). Its function is as follows. Hydrolyzes ribosome-free peptidyl-tRNAs (with 1 or more amino acids incorporated), which drop off the ribosome during protein synthesis, or as a result of ribosome stalling. Functionally, catalyzes the release of premature peptidyl moieties from peptidyl-tRNA molecules trapped in stalled 50S ribosomal subunits, and thus maintains levels of free tRNAs and 50S ribosomes. The sequence is that of Peptidyl-tRNA hydrolase from Rhodococcus jostii (strain RHA1).